We begin with the raw amino-acid sequence, 198 residues long: Glycerol-3-phosphate acyltransferase (198 aa).

Helical transmembrane passes span M1–F21, H77–L97, M111–L131, I136–I156, and G157–K177.

The protein belongs to the PlsY family. Probably interacts with PlsX.

It is found in the cell inner membrane. The enzyme catalyses an acyl phosphate + sn-glycerol 3-phosphate = a 1-acyl-sn-glycero-3-phosphate + phosphate. It functions in the pathway lipid metabolism; phospholipid metabolism. In terms of biological role, catalyzes the transfer of an acyl group from acyl-phosphate (acyl-PO(4)) to glycerol-3-phosphate (G3P) to form lysophosphatidic acid (LPA). This enzyme utilizes acyl-phosphate as fatty acyl donor, but not acyl-CoA or acyl-ACP. This is Glycerol-3-phosphate acyltransferase from Prochlorococcus marinus (strain MIT 9515).